The sequence spans 531 residues: MGTDSTELSEFEKQRLANIAERDALLKKLTLDAQSSGIFPPKLARSSPVSQTKPKKKPAPKKIKKEGEAPVARRMSSRLRGIAAESEVAKRKAEEHYEAVQQAERAKRVRKSDAFSFSEMLVSGQKLSADGLIGVDVVTKGVAMPYQRTFGDEDIEKTADKELKRLREEVSGLQLWEAWEPNRIKVTPERIYTMTFHPSEAKPLIFAGDKMGNLGVLDASQERPVSSIKHEDGDEEEQEDDDDPDPVLTTLKPHTRTISSMHIHPSKPTHLYTASYDSSIRELDLEKTTSVETYAPDSPSDDVPISGIDMAADDPNTLYWTTLDGAFGRYDTRASRRTAVATWQLSEKKIGGFSLYPTHPHFFATASLDRTMRLWDLRKLSHDDPLPVGEHLSRLSVSHAAFNSAGQVATSSYDDSLKIYDFGAKGIASWEQGHTLSDAEMKPDTVVRHNCQTGRWVTILRPQWQANPQSHIQRFCIGNMNRFVDVYSSSGDQLAQLGGDGITAVPAVAVFHRSKNWIAGGTASGKICLWM.

Disordered regions lie at residues 37 to 83 (GIFP…RGIA) and 218 to 264 (DASQ…MHIH). Over residues 53–64 (KPKKKPAPKKIK) the composition is skewed to basic residues. The WD 1 repeat unit spans residues 186 to 227 (VTPERIYTMTFHPSEAKPLIFAGDKMGNLGVLDASQERPVSS). Residues 233–245 (GDEEEQEDDDDPD) are compositionally biased toward acidic residues. WD repeat units follow at residues 253-293 (PHTR…SVET), 300-340 (SDDV…RTAV), 345-385 (LSEK…HDDP), 392-431 (LSRLSVSHAAFNSAGQVATSSYDDSLKIYDFGAKGIASWE), 454-497 (GRWV…LAQL), and 500-531 (DGITAVPAVAVFHRSKNWIAGGTASGKICLWM).

The protein belongs to the WD repeat DDB2/WDR76 family.

DNA-binding protein that binds to both single- and double-stranded DNA. Binds preferentially to UV-damaged DNA. May be involved in DNA-metabolic processes. The sequence is that of DNA damage-binding protein cmr1 from Aspergillus clavatus (strain ATCC 1007 / CBS 513.65 / DSM 816 / NCTC 3887 / NRRL 1 / QM 1276 / 107).